A 312-amino-acid chain; its full sequence is Malate dehydrogenase (312 aa).

NAD(+)-binding positions include 7 to 13 (GAAGGIG) and D34. Substrate contacts are provided by R81 and R87. NAD(+)-binding positions include N94 and 117 to 119 (ITN). N119 and R153 together coordinate substrate. The active-site Proton acceptor is H177. An NAD(+)-binding site is contributed by M227.

The protein belongs to the LDH/MDH superfamily. MDH type 1 family. In terms of assembly, homodimer.

It catalyses the reaction (S)-malate + NAD(+) = oxaloacetate + NADH + H(+). Its function is as follows. Catalyzes the reversible oxidation of malate to oxaloacetate. The protein is Malate dehydrogenase of Shigella dysenteriae serotype 1 (strain Sd197).